Consider the following 396-residue polypeptide: Cytochrome c biogenesis protein Ccs1 (396 aa).

3 helical membrane-spanning segments follow: residues Leu22–Ile42, Ser79–Lys99, and Ala162–Ala182.

Belongs to the Ccs1/CcsB family. In terms of assembly, may interact with CcsA.

It localises to the plastid. It is found in the chloroplast thylakoid membrane. In terms of biological role, required during biogenesis of c-type cytochromes (cytochrome c6 and cytochrome f) at the step of heme attachment. The protein is Cytochrome c biogenesis protein Ccs1 of Cyanidium caldarium (Red alga).